Reading from the N-terminus, the 221-residue chain is Ribonuclease T (221 aa).

One can recognise an Exonuclease domain in the interval 20 to 194; sequence VVIDIETAGF…YDTLQTANLF (175 aa). The Mg(2+) site is built by D23, E25, H181, and D186. Residue H181 is the Proton donor/acceptor of the active site.

This sequence belongs to the RNase T family. Homodimer. The cofactor is Mg(2+).

In terms of biological role, trims short 3' overhangs of a variety of RNA species, leaving a one or two nucleotide 3' overhang. Responsible for the end-turnover of tRNA: specifically removes the terminal AMP residue from uncharged tRNA (tRNA-C-C-A). Also appears to be involved in tRNA biosynthesis. This Buchnera aphidicola subsp. Acyrthosiphon pisum (strain APS) (Acyrthosiphon pisum symbiotic bacterium) protein is Ribonuclease T.